The chain runs to 435 residues: S-locus-specific glycoprotein BS29-2 (435 aa).

The first 30 residues, 1-30 (MKGVGKPYENSHTSFLLVFFVLTLFSPAFS), serve as a signal peptide directing secretion. Positions 33-155 (TLSSIESLKI…NKNDRSGFLW (123 aa)) constitute a Bulb-type lectin domain. Asn113, Asn120, Asn244, Asn260, and Asn389 each carry an N-linked (GlcNAc...) asparagine glycan. One can recognise a PAN domain in the interval 350-430 (CSGDGFTRMK…NGQDLYVRLA (81 aa)). 2 cysteine pairs are disulfide-bonded: Cys380-Cys405 and Cys388-Cys390.

In terms of tissue distribution, stigma.

Involved in sporophytic self-incompatibility system (the inability of flowering plants to achieve self-fertilization). This chain is S-locus-specific glycoprotein BS29-2 (SLSG), found in Brassica oleracea var. alboglabra (Chinese kale).